Reading from the N-terminus, the 1034-residue chain is Probable isoleucine--tRNA ligase, mitochondrial (1034 aa).

The transit peptide at 1-32 (MISLNNSFFNKRVIVNSFNNYKRSFGTKSQNE) directs the protein to the mitochondrion. Residues 94–104 (PYANGDLHMGH) carry the 'HIGH' region motif. A 'KMSKS' region motif is present at residues 655–659 (KMSKS). Position 658 (Lys658) interacts with ATP.

The protein belongs to the class-I aminoacyl-tRNA synthetase family.

The protein localises to the mitochondrion matrix. It carries out the reaction tRNA(Ile) + L-isoleucine + ATP = L-isoleucyl-tRNA(Ile) + AMP + diphosphate. In Dictyostelium discoideum (Social amoeba), this protein is Probable isoleucine--tRNA ligase, mitochondrial (mileS).